The chain runs to 372 residues: MEKRRGPPPCQSEEGCSNSAKIRKAKNGAQLCGPCFSKSFEDDVHETIINNNLFKRGERVAIGASGGKDSTVLAFVMKTLNDRHDYGLDLQLLSIDEGIKGYRDDSLLAVEKNRVEYGLPLTILSYNDLYGWTMDDIVAKIGKKNNCTFCGVFRRQALDRGAFKIGATKLVTGHNADDMAETVLMNVLRGDIARLERCTNIVTGEEGDLPRAKPLKYCFERDIVMYARSNQLEYFYTECIYAPNAYRGYARKYVRDLEKVHPRAILDLIRSGEKVSVKKEVEMPTLKTCERCGYMTSQKMCKACLLIEGLNTGNTDLGVRKSKKTKKVIVETEGGKKEDGGCGSGGGGCGCAGAADETENEETRKRLKDLQF.

The tract at residues 335 to 372 (GKKEDGGCGSGGGGCGCAGAADETENEETRKRLKDLQF) is disordered. Positions 341-351 (GCGSGGGGCGC) are enriched in gly residues. Basic and acidic residues predominate over residues 361–372 (EETRKRLKDLQF).

This sequence belongs to the TtcA family. CTU1/NCS6/ATPBD3 subfamily.

The protein localises to the cytoplasm. It functions in the pathway tRNA modification; 5-methoxycarbonylmethyl-2-thiouridine-tRNA biosynthesis. Functionally, plays a central role in 2-thiolation of mcm(5)S(2)U at tRNA wobble positions of tRNA(Lys), tRNA(Glu) and tRNA(Gln). Directly binds tRNAs and probably acts by catalyzing adenylation of tRNAs, an intermediate required for 2-thiolation. It is unclear whether it acts as a sulfurtransferase that transfers sulfur from thiocarboxylated URM1 onto the uridine of tRNAs at wobble position. In Caenorhabditis briggsae, this protein is Cytoplasmic tRNA 2-thiolation protein 1.